Consider the following 181-residue polypeptide: Acireductone dioxygenase (181 aa).

Fe(2+) is bound by residues His97, His99, Glu103, and His141. Ni(2+)-binding residues include His97, His99, Glu103, and His141.

This sequence belongs to the acireductone dioxygenase (ARD) family. Monomer. Fe(2+) is required as a cofactor. The cofactor is Ni(2+).

The catalysed reaction is 1,2-dihydroxy-5-(methylsulfanyl)pent-1-en-3-one + O2 = 3-(methylsulfanyl)propanoate + CO + formate + 2 H(+). It catalyses the reaction 1,2-dihydroxy-5-(methylsulfanyl)pent-1-en-3-one + O2 = 4-methylsulfanyl-2-oxobutanoate + formate + 2 H(+). The protein operates within amino-acid biosynthesis; L-methionine biosynthesis via salvage pathway; L-methionine from S-methyl-5-thio-alpha-D-ribose 1-phosphate: step 5/6. Functionally, catalyzes 2 different reactions between oxygen and the acireductone 1,2-dihydroxy-3-keto-5-methylthiopentene (DHK-MTPene) depending upon the metal bound in the active site. Fe-containing acireductone dioxygenase (Fe-ARD) produces formate and 2-keto-4-methylthiobutyrate (KMTB), the alpha-ketoacid precursor of methionine in the methionine recycle pathway. Ni-containing acireductone dioxygenase (Ni-ARD) produces methylthiopropionate, carbon monoxide and formate, and does not lie on the methionine recycle pathway. The sequence is that of Acireductone dioxygenase from Pseudomonas paraeruginosa (strain DSM 24068 / PA7) (Pseudomonas aeruginosa (strain PA7)).